We begin with the raw amino-acid sequence, 382 residues long: Serine/threonine-protein kinase US3 homolog (382 aa).

Positions 1-10 (MENKQCDHLT) are enriched in basic and acidic residues. The tract at residues 1 to 75 (MENKQCDHLT…ASESDEDDDD (75 aa)) is disordered. Over residues 12 to 24 (WFSTTSDASESMD) the composition is skewed to polar residues. Residues 45–75 (ADEDLYSDISEGDLEYSDCDSASESDEDDDD) are compositionally biased toward acidic residues. The 287-residue stretch at 93 to 379 (YTVIKTLTPG…AEELLSYPMF (287 aa)) folds into the Protein kinase domain. ATP is bound by residues 99-107 (LTPGSEGRV) and Lys-122. The active-site Proton acceptor is the Asp-207.

It belongs to the protein kinase superfamily. Ser/Thr protein kinase family. Phosphorylated by protein 49; this phosphorylation regulates subsequent phosphorylation of proteins 26 and 29 by US3 homolog. Autophosphorylated.

Its subcellular location is the host cytoplasm. The protein localises to the host nucleus. It catalyses the reaction L-seryl-[protein] + ATP = O-phospho-L-seryl-[protein] + ADP + H(+). The enzyme catalyses L-threonyl-[protein] + ATP = O-phospho-L-threonyl-[protein] + ADP + H(+). In terms of biological role, multifunctional serine/threonine kinase that plays a role in several processes including egress of virus particles from the nucleus, modulation of the actin cytoskeleton and inhibition of apoptosis. Phosphorylates protein 26 and 29, two critical regulators of capsid budding from nucleus to endoplasmic reticulum, thereby facilitating virion egress. Modulates and redistributes host components of the nuclear envelope, including LMNA, emerin/EMD and the nuclear matrix protein MATR3. Phosphorylates envelope glycoprotein B (gB), probably to direct it to the cell surface. Promotes virus intracellular spread by restructuring host cell cytoskeleton. Blocks host apoptosis to extend cell survival and allow efficient viral replication. Promotes viral gene expression by phosphorylating host HDAC2 to reduce viral genome silencing. This chain is Serine/threonine-protein kinase US3 homolog, found in Equine herpesvirus 1 (strain Ab4p) (EHV-1).